A 378-amino-acid polypeptide reads, in one-letter code: Spermidine/putrescine import ATP-binding protein PotA (378 aa).

The 231-residue stretch at 18-248 (VQLAGIRKCF…PKNLFVAGFI (231 aa)) folds into the ABC transporter domain. 50-57 (GPSGCGKT) serves as a coordination point for ATP.

Belongs to the ABC transporter superfamily. Spermidine/putrescine importer (TC 3.A.1.11.1) family. As to quaternary structure, the complex is composed of two ATP-binding proteins (PotA), two transmembrane proteins (PotB and PotC) and a solute-binding protein (PotD).

The protein resides in the cell inner membrane. The catalysed reaction is ATP + H2O + polyamine-[polyamine-binding protein]Side 1 = ADP + phosphate + polyamineSide 2 + [polyamine-binding protein]Side 1.. In terms of biological role, part of the ABC transporter complex PotABCD involved in spermidine/putrescine import. Responsible for energy coupling to the transport system. This is Spermidine/putrescine import ATP-binding protein PotA from Shigella boydii serotype 4 (strain Sb227).